Here is a 270-residue protein sequence, read N- to C-terminus: Putative phosphoenolpyruvate synthase regulatory protein (270 aa).

Residue 150–157 (GVSRCGKT) coordinates ADP.

It belongs to the pyruvate, phosphate/water dikinase regulatory protein family. PSRP subfamily.

The enzyme catalyses [pyruvate, water dikinase] + ADP = [pyruvate, water dikinase]-phosphate + AMP + H(+). It carries out the reaction [pyruvate, water dikinase]-phosphate + phosphate + H(+) = [pyruvate, water dikinase] + diphosphate. Functionally, bifunctional serine/threonine kinase and phosphorylase involved in the regulation of the phosphoenolpyruvate synthase (PEPS) by catalyzing its phosphorylation/dephosphorylation. This is Putative phosphoenolpyruvate synthase regulatory protein from Shewanella loihica (strain ATCC BAA-1088 / PV-4).